Here is a 492-residue protein sequence, read N- to C-terminus: Probable cobyric acid synthase (492 aa).

Residues 252 to 444 form the GATase cobBQ-type domain; sequence PIEVNIVKFS…FHGILENFEF (193 aa). Cys330 functions as the Nucleophile in the catalytic mechanism. His436 is a catalytic residue.

Belongs to the CobB/CobQ family. CobQ subfamily.

It functions in the pathway cofactor biosynthesis; adenosylcobalamin biosynthesis. Catalyzes amidations at positions B, D, E, and G on adenosylcobyrinic A,C-diamide. NH(2) groups are provided by glutamine, and one molecule of ATP is hydrogenolyzed for each amidation. The protein is Probable cobyric acid synthase of Methanococcus maripaludis (strain C7 / ATCC BAA-1331).